The chain runs to 154 residues: ATP synthase subunit b', chloroplastic (154 aa).

The chain crosses the membrane as a helical span at residues 22-42 (GTLPLIAIQFLILMFLLNILL).

The protein belongs to the ATPase B chain family. F-type ATPases have 2 components, F(1) - the catalytic core - and F(0) - the membrane proton channel. F(1) has five subunits: alpha(3), beta(3), gamma(1), delta(1), epsilon(1). F(0) has four main subunits: a(1), b(1), b'(1) and c(10-14). The alpha and beta chains form an alternating ring which encloses part of the gamma chain. F(1) is attached to F(0) by a central stalk formed by the gamma and epsilon chains, while a peripheral stalk is formed by the delta, b and b' chains.

It is found in the plastid. The protein localises to the chloroplast thylakoid membrane. In terms of biological role, f(1)F(0) ATP synthase produces ATP from ADP in the presence of a proton or sodium gradient. F-type ATPases consist of two structural domains, F(1) containing the extramembraneous catalytic core and F(0) containing the membrane proton channel, linked together by a central stalk and a peripheral stalk. During catalysis, ATP synthesis in the catalytic domain of F(1) is coupled via a rotary mechanism of the central stalk subunits to proton translocation. Functionally, component of the F(0) channel, it forms part of the peripheral stalk, linking F(1) to F(0). The b'-subunit is a diverged and duplicated form of b found in plants and photosynthetic bacteria. This Vaucheria litorea (Yellow-green alga) protein is ATP synthase subunit b', chloroplastic.